Consider the following 74-residue polypeptide: ATP synthase subunit 9, mitochondrial (74 aa).

2 consecutive transmembrane segments (helical) span residues 16 to 36 (GLIGAGVGIGVVFGALILGVA) and 50 to 70 (ILGFAFSEATGLFALMMAFLL).

This sequence belongs to the ATPase C chain family. In terms of assembly, F-type ATPases have 2 components, CF(1) - the catalytic core - and CF(0) - the membrane proton channel. CF(1) has five subunits: alpha(3), beta(3), gamma(1), delta(1), epsilon(1). CF(0) has three main subunits: a, b and c.

It is found in the mitochondrion membrane. Its function is as follows. Mitochondrial membrane ATP synthase (F(1)F(0) ATP synthase or Complex V) produces ATP from ADP in the presence of a proton gradient across the membrane which is generated by electron transport complexes of the respiratory chain. F-type ATPases consist of two structural domains, F(1) - containing the extramembraneous catalytic core and F(0) - containing the membrane proton channel, linked together by a central stalk and a peripheral stalk. During catalysis, ATP synthesis in the catalytic domain of F(1) is coupled via a rotary mechanism of the central stalk subunits to proton translocation. Part of the complex F(0) domain. A homomeric c-ring of probably 10 subunits is part of the complex rotary element. In Trichophyton rubrum (Athlete's foot fungus), this protein is ATP synthase subunit 9, mitochondrial (ATP9).